Reading from the N-terminus, the 385-residue chain is Succinyl-diaminopimelate desuccinylase (385 aa).

Residue histidine 73 participates in Zn(2+) binding. Aspartate 75 is an active-site residue. Residue aspartate 106 participates in Zn(2+) binding. Glutamate 141 functions as the Proton acceptor in the catalytic mechanism. Zn(2+) contacts are provided by glutamate 142, glutamate 170, and histidine 359.

This sequence belongs to the peptidase M20A family. DapE subfamily. Homodimer. Zn(2+) is required as a cofactor. Requires Co(2+) as cofactor.

The enzyme catalyses N-succinyl-(2S,6S)-2,6-diaminopimelate + H2O = (2S,6S)-2,6-diaminopimelate + succinate. It functions in the pathway amino-acid biosynthesis; L-lysine biosynthesis via DAP pathway; LL-2,6-diaminopimelate from (S)-tetrahydrodipicolinate (succinylase route): step 3/3. Functionally, catalyzes the hydrolysis of N-succinyl-L,L-diaminopimelic acid (SDAP), forming succinate and LL-2,6-diaminopimelate (DAP), an intermediate involved in the bacterial biosynthesis of lysine and meso-diaminopimelic acid, an essential component of bacterial cell walls. This Methylorubrum extorquens (strain CM4 / NCIMB 13688) (Methylobacterium extorquens) protein is Succinyl-diaminopimelate desuccinylase.